The primary structure comprises 145 residues: D-aminoacyl-tRNA deacylase (145 aa).

Residues 137–138 (GP) carry the Gly-cisPro motif, important for rejection of L-amino acids motif.

It belongs to the DTD family. Homodimer.

Its subcellular location is the cytoplasm. It catalyses the reaction glycyl-tRNA(Ala) + H2O = tRNA(Ala) + glycine + H(+). The enzyme catalyses a D-aminoacyl-tRNA + H2O = a tRNA + a D-alpha-amino acid + H(+). Its function is as follows. An aminoacyl-tRNA editing enzyme that deacylates mischarged D-aminoacyl-tRNAs. Also deacylates mischarged glycyl-tRNA(Ala), protecting cells against glycine mischarging by AlaRS. Acts via tRNA-based rather than protein-based catalysis; rejects L-amino acids rather than detecting D-amino acids in the active site. By recycling D-aminoacyl-tRNA to D-amino acids and free tRNA molecules, this enzyme counteracts the toxicity associated with the formation of D-aminoacyl-tRNA entities in vivo and helps enforce protein L-homochirality. This is D-aminoacyl-tRNA deacylase from Shewanella denitrificans (strain OS217 / ATCC BAA-1090 / DSM 15013).